A 352-amino-acid chain; its full sequence is UDP-N-acetylglucosamine--N-acetylmuramyl-(pentapeptide) pyrophosphoryl-undecaprenol N-acetylglucosamine transferase (352 aa).

The UDP-N-acetyl-alpha-D-glucosamine site is built by Ser-195 and Gln-287.

This sequence belongs to the glycosyltransferase 28 family. MurG subfamily.

Its subcellular location is the cell membrane. It carries out the reaction Mur2Ac(oyl-L-Ala-gamma-D-Glu-L-Lys-D-Ala-D-Ala)-di-trans,octa-cis-undecaprenyl diphosphate + UDP-N-acetyl-alpha-D-glucosamine = beta-D-GlcNAc-(1-&gt;4)-Mur2Ac(oyl-L-Ala-gamma-D-Glu-L-Lys-D-Ala-D-Ala)-di-trans,octa-cis-undecaprenyl diphosphate + UDP + H(+). It participates in cell wall biogenesis; peptidoglycan biosynthesis. In terms of biological role, cell wall formation. Catalyzes the transfer of a GlcNAc subunit on undecaprenyl-pyrophosphoryl-MurNAc-pentapeptide (lipid intermediate I) to form undecaprenyl-pyrophosphoryl-MurNAc-(pentapeptide)GlcNAc (lipid intermediate II). The chain is UDP-N-acetylglucosamine--N-acetylmuramyl-(pentapeptide) pyrophosphoryl-undecaprenol N-acetylglucosamine transferase from Streptococcus pneumoniae (strain ATCC BAA-255 / R6).